Consider the following 718-residue polypeptide: Protein spire homolog 2 (718 aa).

Disordered stretches follow at residues 1 to 22 (MARA…ARPE) and 143 to 166 (DSSC…EGGP). Over residues 10-21 (AAPERAGGAARP) the composition is skewed to low complexity. Positions 26 to 207 (LSLEEVLKVY…RALFVETLEL (182 aa)) constitute a KIND domain. WH2 domains lie at 251–265 (QLMR…LKKV), 281–299 (PFEM…LRKV), and 345–362 (LHEK…LRPV). Serine 374 is subject to Phosphoserine. The segment at 397 to 434 (TDTGSGSQRPRPRVLLKAPTLAEMEEMNTSEEEESPCG) is disordered. Residues 419-432 (EMEEMNTSEEEESP) show a composition bias toward acidic residues. Serine 443, serine 445, and serine 479 each carry phosphoserine. The disordered stretch occupies residues 456 to 518 (MASGLQSAAQ…SSLSSVDGPE (63 aa)). Residues 496-513 (SGQSQPLPSSALPSSLSS) show a composition bias toward low complexity. The tract at residues 538–558 (LALTVEEVVDVRRVLVKAEME) is spir-box.

This sequence belongs to the spire family. In terms of tissue distribution, detected in oocytes.

Its subcellular location is the cytoplasm. It is found in the cytoskeleton. The protein resides in the cytosol. It localises to the cell membrane. The protein localises to the cytoplasmic vesicle membrane. Functionally, acts as an actin nucleation factor, remains associated with the slow-growing pointed end of the new filament. Involved in intracellular vesicle transport along actin fibers, providing a novel link between actin cytoskeleton dynamics and intracellular transport. Required for asymmetric spindle positioning and asymmetric cell division during oocyte meiosis. Required for normal formation of the cleavage furrow and for polar body extrusion during female germ cell meiosis. Also acts in the nucleus: together with SPIRE1 and SPIRE2, promotes assembly of nuclear actin filaments in response to DNA damage in order to facilitate movement of chromatin and repair factors after DNA damage. The sequence is that of Protein spire homolog 2 (Spire2) from Mus musculus (Mouse).